Reading from the N-terminus, the 267-residue chain is O-methyltransferase (267 aa).

The S-adenosyl-L-methionine site is built by Q100 and H145.

This sequence belongs to the methyltransferase superfamily.

It participates in antifungal biosynthesis. In terms of biological role, O-methyltransferase; part of the gene cluster that mediates the biosynthesis of the tetrahydropyranyl antifungal agent lanomycin that acts as an inhibitor of CYP51 and blocks the ergosterol biosynthesis. The biosynthesis probably begins with the formation of an hexaketide, followed by methionine mediated alkylation of C-2 and C-6, and methylation of the reduced C-3 oxygen, pyran forming reductive ring closure, oxygenation of C-4, beta-keto reduction, enoyl reduction and dehydration of the remaining oxygens, and finally, acylation with glycine to complete the biosynthesis. The chain is O-methyltransferase from Pyrenophora dematioidea (Helminthosporium dematioideum).